The sequence spans 130 residues: Glycine cleavage system H protein (130 aa).

The Lipoyl-binding domain occupies 24–106 (IYSVGITEHA…YTDGWLFRIK (83 aa)). K65 is modified (N6-lipoyllysine).

Belongs to the GcvH family. The glycine cleavage system is composed of four proteins: P, T, L and H. It depends on (R)-lipoate as a cofactor.

The glycine cleavage system catalyzes the degradation of glycine. The H protein shuttles the methylamine group of glycine from the P protein to the T protein. The protein is Glycine cleavage system H protein of Pectobacterium atrosepticum (strain SCRI 1043 / ATCC BAA-672) (Erwinia carotovora subsp. atroseptica).